A 298-amino-acid chain; its full sequence is Putative cysteine protease YopT-like blr2058 (298 aa).

Basic and acidic residues predominate over residues 1 to 14 (MYNRVDGEYAHTEQ). 2 disordered regions span residues 1–25 (MYNR…ADGS) and 59–80 (SDAI…SSSS). Over residues 65–80 (SSNTSGLSTSSLSSSS) the composition is skewed to low complexity. C109 is a catalytic residue. Basic and acidic residues predominate over residues 137-162 (NHRSAARRQEQSEKLKTQLKEDKAEG). The interval 137-166 (NHRSAARRQEQSEKLKTQLKEDKAEGSHNF) is disordered. Residues H223 and D238 contribute to the active site.

The protein belongs to the peptidase C58 family.

In terms of biological role, potential cysteine protease, which may play a central role after invasion of host cell. The sequence is that of Putative cysteine protease YopT-like blr2058 from Bradyrhizobium diazoefficiens (strain JCM 10833 / BCRC 13528 / IAM 13628 / NBRC 14792 / USDA 110).